The chain runs to 199 residues: Protein ZNRD2 (199 aa).

The residue at position 2 (alanine 2) is an N-acetylalanine. Positions 53, 56, 70, and 73 each coordinate Zn(2+). Serine 94 carries the phosphoserine modification. The tract at residues 100 to 125 is disordered; sequence QLASASELPLGSRPAPQPPVPRPEHC. A Nuclear export signal motif is present at residues 173 to 194; sequence SLETSIQLCGLIRACAEALRSL.

In terms of assembly, homodimer. Zn(2+) is required as a cofactor.

Its subcellular location is the cytoplasm. Might play a role in mitosis. Antigenic molecule. Could be a centromere-associated protein. May induce anti-centromere antibodies. The sequence is that of Protein ZNRD2 from Homo sapiens (Human).